A 483-amino-acid polypeptide reads, in one-letter code: tRNA sulfurtransferase (483 aa).

One can recognise a THUMP domain in the interval 61-165 (PLVADALTLI…NDRLLLITER (105 aa)). ATP-binding positions include 183–184 (LI), Lys265, Gly287, and Gln296. Cys344 and Cys457 are disulfide-bonded. One can recognise a Rhodanese domain in the interval 405 to 483 (LGSGDVVLDI…GFQNVKVYRP (79 aa)). Residue Cys457 is the Cysteine persulfide intermediate of the active site.

It belongs to the ThiI family.

The protein localises to the cytoplasm. The catalysed reaction is [ThiI sulfur-carrier protein]-S-sulfanyl-L-cysteine + a uridine in tRNA + 2 reduced [2Fe-2S]-[ferredoxin] + ATP + H(+) = [ThiI sulfur-carrier protein]-L-cysteine + a 4-thiouridine in tRNA + 2 oxidized [2Fe-2S]-[ferredoxin] + AMP + diphosphate. It carries out the reaction [ThiS sulfur-carrier protein]-C-terminal Gly-Gly-AMP + S-sulfanyl-L-cysteinyl-[cysteine desulfurase] + AH2 = [ThiS sulfur-carrier protein]-C-terminal-Gly-aminoethanethioate + L-cysteinyl-[cysteine desulfurase] + A + AMP + 2 H(+). It functions in the pathway cofactor biosynthesis; thiamine diphosphate biosynthesis. In terms of biological role, catalyzes the ATP-dependent transfer of a sulfur to tRNA to produce 4-thiouridine in position 8 of tRNAs, which functions as a near-UV photosensor. Also catalyzes the transfer of sulfur to the sulfur carrier protein ThiS, forming ThiS-thiocarboxylate. This is a step in the synthesis of thiazole, in the thiamine biosynthesis pathway. The sulfur is donated as persulfide by IscS. In Sodalis glossinidius (strain morsitans), this protein is tRNA sulfurtransferase.